We begin with the raw amino-acid sequence, 689 residues long: Glycine--tRNA ligase beta subunit (689 aa).

It belongs to the class-II aminoacyl-tRNA synthetase family. Tetramer of two alpha and two beta subunits.

It localises to the cytoplasm. The catalysed reaction is tRNA(Gly) + glycine + ATP = glycyl-tRNA(Gly) + AMP + diphosphate. The protein is Glycine--tRNA ligase beta subunit of Salmonella dublin (strain CT_02021853).